Here is a 199-residue protein sequence, read N- to C-terminus: uncharacterized protein (199 aa).

Positions 1 to 48 (MSANEFYSSGQQGQYNQQNNQERTGAPNNGQYGADNGNPNGERGLFST) are disordered. Ser2 is modified (N-acetylserine). Residues 7 to 21 (YSSGQQGQYNQQNNQ) are compositionally biased toward low complexity. The segment covering 22 to 31 (ERTGAPNNGQ) has biased composition (polar residues). Ser53 and Ser70 each carry phosphoserine. Residues 89-199 (RKEHKQQEQY…RQGFNGGSRW (111 aa)) are disordered. 3 stretches are compositionally biased toward gly residues: residues 124–163 (GGFGGPGGPGGQGFGRQGPQGFGGPGPQEFGGPGGQGFGG), 170–179 (GGPGGQGFGG), and 186–199 (GGQGRQGFNGGSRW).

The protein resides in the mitochondrion. This is an uncharacterized protein from Saccharomyces cerevisiae (strain ATCC 204508 / S288c) (Baker's yeast).